Reading from the N-terminus, the 798-residue chain is MIKKIVTTCFGLVLGLCVFGVGLVAIAILVTYPKLPSLDSLQHYQPKMPLTIYSADGEVIGIYGEQRREFTKIGDFPEVLRNAVIAAEDKRFYQHWGVDVWGVARAVVGNIVAGGVQSGASTITQQVAKNFYLSSEKTFTRKFNEALLAYKIEQSLSKDKILELYFNQIYLGQRAYGFASAAQIYFNKDVRELTLAEVAMLAGLPKAPSAYNPIVNPERAKLRQKYILNNMLEEKMITLQQRDQALNEELHYERFVQKIDQSALYVAEMVRQELYEKYGEDAYTQGFKVYTTVRTDHQKVATEALRKALRNFDRGSSYRGAESYIDLSKGEDVEETVSQYLSGLYTVDKMVPAIVLDVTKRKNVVIQLPSGKRVTLDGRSLGFAARAVNNEKMGESRIRRGSVIRVRNNGGRWVVVQEPLLQATLVSLDAKTGAVRALVGGYDFHSKTFNRAAQAMRQPGSTFKPFIYSAALSKGMTASTMVNDAPISLPGKGANGSVWTPKNSDGRYSGYITLRQALTASKNMVSIRILMSIGVGYAHEYIQRFGFKPSELPASLSMALGTGETTPLKIAEAYSVFANGGYRVSSHVIDKIYGSDGRLRAQMQPLVAGQNAPQAIDPRNAYIMYKIMQDVVRVGTARGAAALGRSDIAGKTGTTNDNKDAWFVGFNPDVVTAVYIGFDKPKSMGRAGYGGTIAVPVWVDYMRFALKGGQGKGMKVPEGVVSSNGEYYMKERMVTDPGLVVDNSGIAAQPSRRIREDKEAGAEDVERGAADEVRQEVQETPVLPSNTGSKQPQLDSLF.

At 1-9 (MIKKIVTTC) the chain is on the cytoplasmic side. The helical; Signal-anchor for type II membrane protein transmembrane segment at 10 to 30 (FGLVLGLCVFGVGLVAIAILV) threads the bilayer. Topologically, residues 31–798 (TYPKLPSLDS…SKQPQLDSLF (768 aa)) are periplasmic. Residues 50 to 218 (LTIYSADGEV…SAYNPIVNPE (169 aa)) form a transglycosylase region. Glutamate 88 (proton donor; for transglycosylase activity) is an active-site residue. The interval 414–700 (VVVQEPLLQA…GTIAVPVWVD (287 aa)) is transpeptidase. Serine 461 (acyl-ester intermediate; for transpeptidase activity) is an active-site residue. The interval 751 to 798 (SRRIREDKEAGAEDVERGAADEVRQEVQETPVLPSNTGSKQPQLDSLF) is disordered. The span at 753–777 (RIREDKEAGAEDVERGAADEVRQEV) shows a compositional bias: basic and acidic residues. The segment covering 783–798 (LPSNTGSKQPQLDSLF) has biased composition (polar residues).

It in the N-terminal section; belongs to the glycosyltransferase 51 family. The protein in the C-terminal section; belongs to the transpeptidase family.

The protein resides in the cell inner membrane. The enzyme catalyses [GlcNAc-(1-&gt;4)-Mur2Ac(oyl-L-Ala-gamma-D-Glu-L-Lys-D-Ala-D-Ala)](n)-di-trans,octa-cis-undecaprenyl diphosphate + beta-D-GlcNAc-(1-&gt;4)-Mur2Ac(oyl-L-Ala-gamma-D-Glu-L-Lys-D-Ala-D-Ala)-di-trans,octa-cis-undecaprenyl diphosphate = [GlcNAc-(1-&gt;4)-Mur2Ac(oyl-L-Ala-gamma-D-Glu-L-Lys-D-Ala-D-Ala)](n+1)-di-trans,octa-cis-undecaprenyl diphosphate + di-trans,octa-cis-undecaprenyl diphosphate + H(+). The catalysed reaction is Preferential cleavage: (Ac)2-L-Lys-D-Ala-|-D-Ala. Also transpeptidation of peptidyl-alanyl moieties that are N-acyl substituents of D-alanine.. Its pathway is cell wall biogenesis; peptidoglycan biosynthesis. Functionally, cell wall formation. Synthesis of cross-linked peptidoglycan from the lipid intermediates. The enzyme has a penicillin-insensitive transglycosylase N-terminal domain (formation of linear glycan strands) and a penicillin-sensitive transpeptidase C-terminal domain (cross-linking of the peptide subunits). In Neisseria cinerea, this protein is Penicillin-binding protein 1A (mrcA).